Consider the following 389-residue polypeptide: MPIRDWRQQSQRWPIDYWLIGALAILITLGLTMVASSSIAISEKRFGDPTHYLLRQMFSMGLGLMAAYIVLKIPLSFWRKHRGQLFIVGLVLLVLVLVFGREINGSKRWLPLVLMNFQVSEFMKIAVVVFMAGYLDRHATAVRESFEAVIRLALPFGVMAILLLLEPDFGSTFVIAVIITGMLLIAGAPWRFFVMTVLPIATLLVMMVITSPYRMARVTNFLDPWSDPFGNGYQLTQALIASGRGEWFGVGIGESVQKLLYLPDAHTDFLFSIYAEEYGLIGVAFLALLYLTLLYRCFRIGRKAFNQTHYFGGLIAYGVGIWIVLQAMINMGVNLGLFPTKGLTLPFMSYGGSSVLMLFIGVAMVLRVDLETRQAVLEHSVDESGQGKR.

At 1–14 the chain is on the cytoplasmic side; that stretch reads MPIRDWRQQSQRWP. Residues 15–35 form a helical membrane-spanning segment; that stretch reads IDYWLIGALAILITLGLTMVA. At 36 to 57 the chain is on the periplasmic side; it reads SSSIAISEKRFGDPTHYLLRQM. Residues 58-78 traverse the membrane as a helical segment; the sequence is FSMGLGLMAAYIVLKIPLSFW. Residues 79–84 are Cytoplasmic-facing; sequence RKHRGQ. The chain crosses the membrane as a helical span at residues 85–105; sequence LFIVGLVLLVLVLVFGREING. Over 106–111 the chain is Periplasmic; the sequence is SKRWLP. The chain crosses the membrane as a helical span at residues 112–132; the sequence is LVLMNFQVSEFMKIAVVVFMA. The Cytoplasmic segment spans residues 133–144; the sequence is GYLDRHATAVRE. The chain crosses the membrane as a helical span at residues 145–165; the sequence is SFEAVIRLALPFGVMAILLLL. Residues 166–168 lie on the Periplasmic side of the membrane; it reads EPD. The helical transmembrane segment at 169–189 threads the bilayer; sequence FGSTFVIAVIITGMLLIAGAP. Residues 190 to 191 lie on the Cytoplasmic side of the membrane; sequence WR. A helical membrane pass occupies residues 192 to 212; the sequence is FFVMTVLPIATLLVMMVITSP. Over 213–268 the chain is Periplasmic; sequence YRMARVTNFLDPWSDPFGNGYQLTQALIASGRGEWFGVGIGESVQKLLYLPDAHTD. The helical transmembrane segment at 269–289 threads the bilayer; it reads FLFSIYAEEYGLIGVAFLALL. Over 290–310 the chain is Cytoplasmic; that stretch reads YLTLLYRCFRIGRKAFNQTHY. A helical membrane pass occupies residues 311–331; that stretch reads FGGLIAYGVGIWIVLQAMINM. The Periplasmic portion of the chain corresponds to 332 to 344; that stretch reads GVNLGLFPTKGLT. The helical transmembrane segment at 345–365 threads the bilayer; it reads LPFMSYGGSSVLMLFIGVAMV. At 366–389 the chain is on the cytoplasmic side; the sequence is LRVDLETRQAVLEHSVDESGQGKR.

This sequence belongs to the SEDS family. FtsW subfamily.

It localises to the cell inner membrane. The enzyme catalyses [GlcNAc-(1-&gt;4)-Mur2Ac(oyl-L-Ala-gamma-D-Glu-L-Lys-D-Ala-D-Ala)](n)-di-trans,octa-cis-undecaprenyl diphosphate + beta-D-GlcNAc-(1-&gt;4)-Mur2Ac(oyl-L-Ala-gamma-D-Glu-L-Lys-D-Ala-D-Ala)-di-trans,octa-cis-undecaprenyl diphosphate = [GlcNAc-(1-&gt;4)-Mur2Ac(oyl-L-Ala-gamma-D-Glu-L-Lys-D-Ala-D-Ala)](n+1)-di-trans,octa-cis-undecaprenyl diphosphate + di-trans,octa-cis-undecaprenyl diphosphate + H(+). It functions in the pathway cell wall biogenesis; peptidoglycan biosynthesis. Peptidoglycan polymerase that is essential for cell division. This is Probable peptidoglycan glycosyltransferase FtsW from Hydrogenovibrio crunogenus (strain DSM 25203 / XCL-2) (Thiomicrospira crunogena).